We begin with the raw amino-acid sequence, 407 residues long: 1-deoxy-D-xylulose 5-phosphate reductoisomerase (407 aa).

Residues Thr-22, Gly-23, Ser-24, Ile-25, Gly-48, Asn-51, and Asn-128 each contribute to the NADPH site. Position 129 (Lys-129) interacts with 1-deoxy-D-xylulose 5-phosphate. Position 130 (Glu-130) interacts with NADPH. Asp-152 serves as a coordination point for Mn(2+). 1-deoxy-D-xylulose 5-phosphate is bound by residues Ser-153, Glu-154, Ser-178, and His-201. Glu-154 is a binding site for Mn(2+). Gly-207 serves as a coordination point for NADPH. The 1-deoxy-D-xylulose 5-phosphate site is built by Ser-214, Asn-219, Lys-220, and Glu-223. A Mn(2+)-binding site is contributed by Glu-223.

Belongs to the DXR family. The cofactor is Mg(2+). Requires Mn(2+) as cofactor.

The enzyme catalyses 2-C-methyl-D-erythritol 4-phosphate + NADP(+) = 1-deoxy-D-xylulose 5-phosphate + NADPH + H(+). It participates in isoprenoid biosynthesis; isopentenyl diphosphate biosynthesis via DXP pathway; isopentenyl diphosphate from 1-deoxy-D-xylulose 5-phosphate: step 1/6. In terms of biological role, catalyzes the NADPH-dependent rearrangement and reduction of 1-deoxy-D-xylulose-5-phosphate (DXP) to 2-C-methyl-D-erythritol 4-phosphate (MEP). In Mycobacterium avium (strain 104), this protein is 1-deoxy-D-xylulose 5-phosphate reductoisomerase.